Consider the following 115-residue polypeptide: Putative gamma-glutamylcyclotransferase VC_2546 (115 aa).

8 to 11 (YGTL) contributes to the substrate binding site. Glu-73 functions as the Proton acceptor in the catalytic mechanism.

The protein belongs to the gamma-glutamylcyclotransferase family.

Its function is as follows. Putative gamma-glutamylcyclotransferase. This chain is Putative gamma-glutamylcyclotransferase VC_2546, found in Vibrio cholerae serotype O1 (strain ATCC 39315 / El Tor Inaba N16961).